We begin with the raw amino-acid sequence, 657 residues long: Keratinocyte proline-rich protein (657 aa).

Disordered regions lie at residues 285-320 (QGTYGSYTSQRRSQSTSRCLPPRRLQPSYRSCSPPR), 425-493 (HPFP…PSPE), and 517-568 (QPVP…CGQP). The span at 292 to 302 (TSQRRSQSTSR) shows a compositional bias: low complexity. A compositionally biased stretch (basic and acidic residues) spans 434–444 (QHLDRSPESSR). Ser-442 carries the post-translational modification Phosphoserine. Pro residues-rich tracts occupy residues 449 to 493 (VPAP…PSPE), 517 to 530 (QPVPHPAPRPVPRP), and 539 to 561 (GPRPQPCPLPHPEPMPRPAPCSS).

It is found in the cytoplasm. In Mus musculus (Mouse), this protein is Keratinocyte proline-rich protein.